The chain runs to 140 residues: Large ribosomal subunit protein bL17 (140 aa).

The protein belongs to the bacterial ribosomal protein bL17 family. As to quaternary structure, part of the 50S ribosomal subunit. Contacts protein L32.

This chain is Large ribosomal subunit protein bL17, found in Paracoccus denitrificans (strain Pd 1222).